The primary structure comprises 267 residues: PHD finger protein ALFIN-LIKE 7 (267 aa).

Residues 162-207 (TKVSNGSSKSNKSNPKPSKQSNSNSKPAKPPQPKDEEDSGPEGAED) form a disordered region. Positions 165 to 188 (SNGSSKSNKSNPKPSKQSNSNSKP) are enriched in low complexity. Positions 196 to 207 (DEEDSGPEGAED) are enriched in acidic residues. Residues 211-263 (AYMCGACGETYANGEFWICCDVCEKWFHGKCVRITPAKAEHIKQYKCPGCSSK) form a PHD-type zinc finger.

This sequence belongs to the Alfin family. As to quaternary structure, interacts with H3K4me3 and to a lesser extent with H3K4me2.

It localises to the nucleus. In terms of biological role, histone-binding component that specifically recognizes H3 tails trimethylated on 'Lys-4' (H3K4me3), which mark transcription start sites of virtually all active genes. The chain is PHD finger protein ALFIN-LIKE 7 from Oryza sativa subsp. indica (Rice).